Here is a 115-residue protein sequence, read N- to C-terminus: Secapin (115 aa).

Positions methionine 1–glycine 24 are cleaved as a signal peptide. A propeptide spanning residues glutamine 25–arginine 90 is cleaved from the precursor. An intrachain disulfide couples cysteine 99 to cysteine 110.

It belongs to the secapin family. As to expression, expressed in the epidermis, fat body and venom gland.

Its subcellular location is the secreted. In terms of biological role, serine protease inhibitor which exhibits antifibrinolytic, antielastolytic and antimicrobial activities. Displays antimicrobial activity against bacteria and fungi. Likely functions in the innate immune response to microbial infection and possibly in the venom, as an antifibrinolytic agent. The recombinant form inhibits trypsin (IC(50)=80.02 nM, Ki=127.25 nM), chymotrypsin (IC(50)=393.78 nM, Ki=432.59 nM), the microbial serine proteases subtilisin A (IC(50)=379.20 nM, Ki=492.77 nM) and proteinase K (IC(50)=189.43 nM, Ki=271.76 nM), plasmin (IC(50)=457.98 nM, Ki=502.91 nM), human elastase (IC(50)=347.81 nM, Ki=469.90 nM) and porcine elastase (IC(50)=94.70 nM, Ki=125.62 nM). Does not inhibit thrombin. Binds to human plasmin and inhibits the plasmin-mediated degradation of fibrin to fibrin degradation products, indicating its role as an anti-fibrinolytic agent. Also binds to bacterial and fungal surfaces. Exhibits antimicrobial activity against the Gram-positive bacteria B.thuringiensis (MIC=4.21 uM) and P.larvae (MIC=11.13 uM), the Gram-negative bacteria E.coli (MIC=6.50 uM) and the multidrug-resistant A.baumannii (MIC=5 ug/ml, MBC=10 ug/ml), as well as against the fungus B.bassiana (IC(50)=2.57 uM). The synthetic peptide also exhibits antimicrobial activity against the Gram-positive bacterium P.larvae (MIC=41.12 uM), the Gram-negative bacterium P.aeruginosa (MIC=65.75 uM), and the fungus B.bassiana (IC(50)=44.27 uM). Is also able to prevent A.baumannii biofilm formation and eliminate established A.baumannii biofilms. In vitro, does not induce an inflammatory response and has no cytotoxic activity against mammalian cells. This chain is Secapin, found in Apis cerana (Indian honeybee).